Consider the following 38-residue polypeptide: Large ribosomal subunit protein bL36 (38 aa).

It belongs to the bacterial ribosomal protein bL36 family.

The polypeptide is Large ribosomal subunit protein bL36 (Cellvibrio japonicus (strain Ueda107) (Pseudomonas fluorescens subsp. cellulosa)).